The primary structure comprises 197 residues: Casparian strip membrane protein 5 (197 aa).

Residues 1–34 (MSTTIDMPGSSKAAKAGKPVLVTTPSRPGGWKKG) are Cytoplasmic-facing. The chain crosses the membrane as a helical span at residues 35-55 (VAIMDFILRLGAIAAALGAAA). Residues 56-84 (TMGLSDQTLPFFTQFFQFEASYDSFTTFQ) lie on the Extracellular side of the membrane. A helical transmembrane segment spans residues 85 to 105 (FFVITMALVAGYLVLSLPLSI). The Cytoplasmic segment spans residues 106–117 (VAVVRPHAAGPR). A helical transmembrane segment spans residues 118-138 (LFLIILDTVFLTLATASGASA). Residues 139–171 (ASIVYLAHNGNQDTNWIAICNQFGDFCAQTSGA) lie on the Extracellular side of the membrane. A helical membrane pass occupies residues 172-192 (VVSSLVAVLVFVLLIVMSALV). Over 193 to 197 (LGKKH) the chain is Cytoplasmic.

It belongs to the Casparian strip membrane proteins (CASP) family. As to quaternary structure, homodimer and heterodimers.

Its subcellular location is the cell membrane. Regulates membrane-cell wall junctions and localized cell wall deposition. Required for establishment of the Casparian strip membrane domain (CSD) and the subsequent formation of Casparian strips, a cell wall modification of the root endodermis that determines an apoplastic barrier between the intraorganismal apoplasm and the extraorganismal apoplasm and prevents lateral diffusion. This is Casparian strip membrane protein 5 from Lotus japonicus (Lotus corniculatus var. japonicus).